The primary structure comprises 108 residues: Acid stress chaperone HdeB (108 aa).

An N-terminal signal peptide occupies residues 1 to 29; the sequence is MNISSLRKAFIFMGAVAALSLVNAQSALA. N6-acetyllysine is present on Lys-93.

It belongs to the HdeB family.

It localises to the periplasm. In terms of biological role, required for optimal acid stress protection, which is important for survival of enteric bacteria in the acidic environment of the host stomach. Exhibits a chaperone-like activity at acidic pH by preventing the aggregation of many different periplasmic proteins. The protein is Acid stress chaperone HdeB of Escherichia coli O6:H1 (strain CFT073 / ATCC 700928 / UPEC).